Here is a 1363-residue protein sequence, read N- to C-terminus: Spike glycoprotein (1363 aa).

Residues 1–13 (MFLILLISLPMAL) form the signal peptide. Residues 14–1307 (AVIGDLKCTT…GTYEYYVKWP (1294 aa)) lie on the Extracellular side of the membrane. Positions 15-298 (VIGDLKCTTV…DFMSEIKCKT (284 aa)) constitute a BetaCoV S1-NTD domain. Intrachain disulfides connect Cys-21–Cys-165, Cys-160–Cys-193, Cys-172–Cys-252, Cys-286–Cys-296, and Cys-331–Cys-356. Asn-59 and Asn-133 each carry an N-linked (GlcNAc...) asparagine; by host glycan. N-linked (GlcNAc...) asparagine; by host glycosylation is present at Asn-198. A BetaCoV S1-CTD domain is found at 329–617 (PDCNIEAWLN…DVNSGTTCST (289 aa)). Asn-359 carries N-linked (GlcNAc...) asparagine; by host glycosylation. Intrachain disulfides connect Cys-374–Cys-427 and Cys-386–Cys-615. Asn-437, Asn-649, Asn-676, Asn-696, Asn-714, Asn-739, and Asn-788 each carry an N-linked (GlcNAc...) asparagine; by host glycan. Fusion peptide regions lie at residues 914-935 (SAIE…VEAY) and 933-953 (EAYN…VQSY). Asn-937 carries an N-linked (GlcNAc...) asparagine; by host glycan. A disulfide bridge connects residues Cys-938 and Cys-949. A heptad repeat 1 region spans residues 1014 to 1064 (QKLIANAFNNALDAIQEGFDATNSALVKIQAVVNANAEALNNLLQQLSNRF). Residues 1043–1087 (QAVVNANAEALNNLLQQLSNRFGAISSSLQEILSRLDALEAQRQI) adopt a coiled-coil conformation. N-linked (GlcNAc...) asparagine; by host glycosylation is found at Asn-1194, Asn-1224, Asn-1234, Asn-1253, Asn-1267, and Asn-1288. Residues 1258–1296 (APDLSLDYINVTFLDLQDEMNRLQEAIKLLNQSYINLKD) form a heptad repeat 2 region. Residues 1269 to 1297 (TFLDLQDEMNRLQEAIKLLNQSYINLKDI) are a coiled coil. The chain crosses the membrane as a helical span at residues 1308–1328 (WYVWLLIGFAGVAMLVLLFFI). The Cytoplasmic segment spans residues 1329–1363 (CCCTGCGTSCFKKCGGCCDDYTGHQELVIKTSHDD). The KxHxx motif lies at 1359–1363 (TSHDD).

The protein belongs to the betacoronaviruses spike protein family. As to quaternary structure, homotrimer; each monomer consists of a S1 and a S2 subunit. The resulting peplomers protrude from the virus surface as spikes. In terms of processing, specific enzymatic cleavages in vivo yield mature proteins. The precursor is processed into S1 and S2 by host cell furin or another cellular protease to yield the mature S1 and S2 proteins. Additionally, a second cleavage leads to the release of a fusion peptide after viral attachment to host cell receptor. Post-translationally, the cytoplasmic Cys-rich domain is palmitoylated. Spike glycoprotein is digested within host endosomes.

Its subcellular location is the virion membrane. It is found in the host endoplasmic reticulum-Golgi intermediate compartment membrane. It localises to the host cell membrane. Attaches the virion to the cell membrane by interacting with host receptor, initiating the infection. In terms of biological role, mediates fusion of the virion and cellular membranes by acting as a class I viral fusion protein. Under the current model, the protein has at least three conformational states: pre-fusion native state, pre-hairpin intermediate state, and post-fusion hairpin state. During viral and target cell membrane fusion, the coiled coil regions (heptad repeats) assume a trimer-of-hairpins structure, positioning the fusion peptide in close proximity to the C-terminal region of the ectodomain. The formation of this structure appears to drive apposition and subsequent fusion of viral and target cell membranes. Functionally, acts as a viral fusion peptide which is unmasked following S2 cleavage occurring upon virus endocytosis. In Bos taurus (Bovine), this protein is Spike glycoprotein.